Reading from the N-terminus, the 311-residue chain is Homeobox-leucine zipper protein HOX1 (311 aa).

Disordered stretches follow at residues 29–69 (AGGA…SDHR) and 97–160 (AETT…KKLR). Over residues 119–145 (SSPNSTLSSLSGKRGAPSAATAAAAAA) the composition is skewed to low complexity. Residues 154 to 213 (GSRKKLRLSKDQAAVLEDTFKEHNTLNPKQKAALARQLNLKPRQVEVWFQNRRARTKLKQ) constitute a DNA-binding region (homeobox). The leucine-zipper stretch occupies residues 212–256 (KQTEVDCELLKRCCETLTDENRRLHRELQELRALKLATAAAAPHH). Residues 279 to 311 (SAATTTRNNSGAAPARPVPTRPWPPAAAQRSSA) are disordered. Polar residues predominate over residues 280–289 (AATTTRNNSG). A compositionally biased stretch (pro residues) spans 294-303 (RPVPTRPWPP).

It belongs to the HD-ZIP homeobox family. Class II subfamily. As to quaternary structure, homodimer. May form a heterodimer with HOX2, HOX3 or HOX7. Expressed in root provascular and vascular cylinder, provascular and vascular strands of leaves, provascular and vascular strands of the whole panicle, in mature embryo provascular bundles of scutellum and embryonic axis and provascular and vascular strands of young immature spikelet organs. Expressed in differentiating and differentiated xylem and phloem elements, and in outer and inner bundle sheath cells of all vascular bundles. Expressed in auricles, ligules, culm, guard cells brac hairs and pollen.

The protein localises to the nucleus. Functionally, probable transcription repressor involved leaf development. Binds to the DNA sequence 5'-CAAT[GC]ATTG-3'. May act as a regulatory switch to specify provascular cell fate. This is Homeobox-leucine zipper protein HOX1 (HOX1) from Oryza sativa subsp. indica (Rice).